Reading from the N-terminus, the 1453-residue chain is Collagen alpha-1(I) chain (1453 aa).

A signal peptide spans 1–22 (MFSFVDSRLLLLIAATVLLTRG). A propeptide spans 23–151 (EGEEDIQTGS…PPGLGGNFAP (129 aa)) (N-terminal propeptide). The VWFC domain occupies 31-89 (GSCVQDGLTYNDKDVWKPEPCQICVCDSGNILCDEVICEDTSDCPNAEIPFGECCPICP). Residues 98-1203 (PESAGVEGPK…PQEKAHDGGR (1106 aa)) form a disordered region. Residues 106-116 (PKGDTGPRGDR) are compositionally biased toward basic and acidic residues. Residues 131 to 143 (PGLPGPPGPPGPP) are compositionally biased toward pro residues. Residue glutamine 152 is modified to Pyrrolidone carboxylic acid. Lysine 160 is subject to Allysine. Residues 162-176 (AGVAVPGPMGPAGPR) show a composition bias toward low complexity. 4-hydroxyproline is present on residues proline 179, proline 182, proline 185, proline 194, proline 197, proline 200, proline 215, proline 230, proline 236, proline 245, and proline 251. A compositionally biased stretch (low complexity) spans 187–206 (PQGFQGPPGEPGEPGASGPM). The residue at position 254 (lysine 254) is a 5-hydroxylysine; alternate. O-linked (Gal...) hydroxylysine; partial glycosylation occurs at lysine 254. Positions 265–284 (AKGQPGPAGPKGEPGSPGEN) are enriched in low complexity. 4-hydroxyproline is present on residues proline 269, proline 278, proline 281, proline 287, proline 296, proline 302, proline 317, proline 323, proline 332, and proline 335. Over residues 307 to 319 (PAGARGNDGAPGA) the composition is skewed to low complexity. The segment covering 320–334 (AGPPGPTGPAGPPGF) has biased composition (pro residues). Over residues 350-361 (RGSEGPQGSRGE) the composition is skewed to low complexity. Proline 362, proline 365, proline 377, proline 383, proline 392, proline 398, proline 401, and proline 416 each carry 4-hydroxyproline. Residues 368 to 418 (AGAAGPAGNPGADGQPGAKGATGAPGIAGAPGFPGARGPSGPQGPSGAPGP) are compositionally biased toward low complexity. Residue lysine 419 is modified to 5-hydroxylysine. 4-hydroxyproline is present on residues proline 425, proline 428, proline 440, proline 449, proline 464, proline 470, proline 479, and proline 485. Residues 463–482 (EPGPAGLPGPAGERGAPGSR) show a composition bias toward low complexity. At lysine 494 the chain carries 5-hydroxylysine. 31 positions are modified to 4-hydroxyproline: proline 497, proline 503, proline 512, proline 518, proline 524, proline 533, proline 536, proline 545, proline 554, proline 560, proline 572, proline 581, proline 584, proline 590, proline 593, proline 611, proline 629, proline 635, proline 641, proline 647, proline 653, proline 659, proline 671, proline 680, proline 692, proline 704, proline 707, proline 713, proline 719, proline 728, and proline 737. A compositionally biased stretch (low complexity) spans 527 to 581 (KGLTGSPGSPGPDGKTGPPGPAGQDGRPGPAGPPGARGQAGVMGFPGPKGAAGEP). Over residues 623-664 (QGPAGAPGFQGLPGPAGPPGEAGKPGEQGVPGNAGAPGPAGA) the composition is skewed to low complexity. Residues 685–722 (PRGANGAPGNDGAKGDAGAPGAPGNEGPPGLEGMPGER) show a composition bias toward low complexity. 5-hydroxylysine is present on lysine 740. Residues proline 746, proline 761, proline 767, proline 776, proline 788, proline 794, proline 797, proline 806, proline 812, proline 830, proline 839, and proline 848 each carry the 4-hydroxyproline modification. A compositionally biased stretch (low complexity) spans 800–827 (AGFAGPPGADGQPGAKGETGDAGAKGDA). The span at 835-883 (PTGAPGPAGZVGAPGPKGARGSAGPPGATGFPGAAGRVGPPGPSGNIGL) shows a compositional bias: low complexity. Residue lysine 851 is modified to 5-hydroxylysine. 4-hydroxyproline is present on residues proline 860 and proline 866. Residue proline 874 is modified to 3-hydroxyproline. 18 positions are modified to 4-hydroxyproline: proline 875, proline 884, proline 887, proline 908, proline 911, proline 917, proline 920, proline 926, proline 935, proline 953, proline 962, proline 965, proline 971, proline 986, proline 992, proline 998, proline 1007, and proline 1013. Over residues 890–908 (AGKZGSKGPRGETGPAGRP) the composition is skewed to low complexity. The segment covering 910–920 (EPGPAGPPGPP) has biased composition (pro residues). The span at 985–995 (PPGPMGPPGLA) shows a compositional bias: pro residues. The segment covering 997–1021 (PPGEAGREGAPGAEGAPGRDGAAGP) has biased composition (low complexity). Lysine 1022 is subject to 5-hydroxylysine; partial. The segment covering 1031 to 1046 (AGPPGAPGAPGAPGPV) has biased composition (pro residues). 4-hydroxyproline is present on residues proline 1034, proline 1037, proline 1040, and proline 1067. Residues 1070–1081 (AGARGPAGPQGP) show a composition bias toward low complexity. Over residues 1082-1096 (RGDKGETGEQGDRGM) the composition is skewed to basic and acidic residues. Lysine 1085 carries the post-translational modification 5-hydroxylysine; partial. 5-hydroxylysine; alternate is present on lysine 1097. Lysine 1097 is a glycosylation site (O-linked (Gal...) hydroxylysine; partial). A 4-hydroxyproline mark is found at proline 1109, proline 1112, proline 1115, proline 1133, and proline 1148. Residues 1115-1139 (PGEQGPSGASGPAGPRGPPGSAGAA) show a composition bias toward low complexity. Proline 1153 carries the post-translational modification 3-hydroxyproline. Position 1154 is a 4-hydroxyproline (proline 1154). The span at 1166 to 1181 (VGPPGPPGPPGPPGPP) shows a compositional bias: pro residues. Proline 1168 carries the 3-hydroxyproline modification. Proline 1169 bears the 4-hydroxyproline mark. Proline 1171 carries the 3-hydroxyproline modification. Proline 1172 carries the 4-hydroxyproline modification. Proline 1174 is subject to 3-hydroxyproline. 4-hydroxyproline occurs at positions 1175, 1178, and 1181. Position 1197 is an allysine (lysine 1197). Residues 1208–1453 (DDANVMRDRD…GIDIGPVCFL (246 aa)) constitute a propeptide, C-terminal propeptide. The region spanning 1218–1453 (LEVDTTLKSL…GIDIGPVCFL (236 aa)) is the Fibrillar collagen NC1 domain. 3 disulfide bridges follow: cysteine 1248-cysteine 1280, cysteine 1288-cysteine 1451, and cysteine 1359-cysteine 1404. Ca(2+) is bound by residues aspartate 1266, asparagine 1268, glutamine 1269, cysteine 1271, and aspartate 1274. Residue asparagine 1354 is glycosylated (N-linked (GlcNAc...) asparagine).

It belongs to the fibrillar collagen family. As to quaternary structure, trimers of one alpha 2(I) and two alpha 1(I) chains. In terms of processing, contains mostly 4-hydroxyproline. Proline residues at the third position of the tripeptide repeating unit (G-X-Y) are 4-hydroxylated in some or all of the chains. Post-translationally, contains 3-hydroxyproline. This modification occurs on the first proline residue in the sequence motif Gly-Pro-Hyp, where Hyp is 4-hydroxyproline. Lysine residues at the third position of the tripeptide repeating unit (G-X-Y) are 5-hydroxylated in some or all of the chains. In terms of processing, O-glycosylated on hydroxylated lysine residues. The O-linked glycan consists of a Glc-Gal disaccharide. Forms the fibrils of tendon, ligaments and bones. In bones the fibrils are mineralized with calcium hydroxyapatite.

The protein resides in the secreted. It localises to the extracellular space. Its subcellular location is the extracellular matrix. Functionally, type I collagen is a member of group I collagen (fibrillar forming collagen). The sequence is that of Collagen alpha-1(I) chain (COL1A1) from Gallus gallus (Chicken).